The primary structure comprises 466 residues: Cysteine--tRNA ligase (466 aa).

Residue Cys29 participates in Zn(2+) binding. The 'HIGH' region signature appears at 31–41; the sequence is ATVQAAPHIGH. Residues Cys208, His233, and Glu237 each coordinate Zn(2+). The 'KMSKS' region signature appears at 264–268; it reads KMSKS. Lys267 provides a ligand contact to ATP.

It belongs to the class-I aminoacyl-tRNA synthetase family. In terms of assembly, monomer. The cofactor is Zn(2+).

It is found in the cytoplasm. It carries out the reaction tRNA(Cys) + L-cysteine + ATP = L-cysteinyl-tRNA(Cys) + AMP + diphosphate. The sequence is that of Cysteine--tRNA ligase from Streptomyces griseus subsp. griseus (strain JCM 4626 / CBS 651.72 / NBRC 13350 / KCC S-0626 / ISP 5235).